A 295-amino-acid chain; its full sequence is Nucleotide-binding protein LSL_1171 (295 aa).

Residue 13 to 20 (GMSGAGKT) participates in ATP binding. 63–66 (DLRS) contacts GTP.

Belongs to the RapZ-like family.

Displays ATPase and GTPase activities. The polypeptide is Nucleotide-binding protein LSL_1171 (Ligilactobacillus salivarius (strain UCC118) (Lactobacillus salivarius)).